We begin with the raw amino-acid sequence, 160 residues long: SsrA-binding protein (160 aa).

Residues 137-153 (DKRDDIKTREWKQDKAR) show a composition bias toward basic and acidic residues. The tract at residues 137–160 (DKRDDIKTREWKQDKARIMKNANR) is disordered.

This sequence belongs to the SmpB family.

It localises to the cytoplasm. Required for rescue of stalled ribosomes mediated by trans-translation. Binds to transfer-messenger RNA (tmRNA), required for stable association of tmRNA with ribosomes. tmRNA and SmpB together mimic tRNA shape, replacing the anticodon stem-loop with SmpB. tmRNA is encoded by the ssrA gene; the 2 termini fold to resemble tRNA(Ala) and it encodes a 'tag peptide', a short internal open reading frame. During trans-translation Ala-aminoacylated tmRNA acts like a tRNA, entering the A-site of stalled ribosomes, displacing the stalled mRNA. The ribosome then switches to translate the ORF on the tmRNA; the nascent peptide is terminated with the 'tag peptide' encoded by the tmRNA and targeted for degradation. The ribosome is freed to recommence translation, which seems to be the essential function of trans-translation. In Edwardsiella ictaluri (strain 93-146), this protein is SsrA-binding protein.